The following is a 257-amino-acid chain: MSLLSKTRELNTLLQKHKGIAVDFKDVAQTISSVTVTNVFIVSRRGKILGSSLNELLKSQRIIQMLEERHIPSEYTERLMEVKQTESNIDIDNVLTVFPPENRELFIDSRTTIFPILGGGERLGTLVLGRVHDDFNENDLVLGEYAATVIGMEILREKHSEVEKEARDKAAITMAINSLSYSEKEAIEHIFEELGGTEGLLIASKVADRVGITRSVIVNALRKLESAGVIESRSLGMKGTFIKVKKEKFLDELEKSK.

Residues 1–155 (MSLLSKTREL…AATVIGMEIL (155 aa)) form a GAF domain region. GTP-binding residues include Val-22, Phe-24, Ser-43, Arg-44, Arg-45, and Lys-47. 3 residues coordinate L-isoleucine: Arg-61, Thr-96, and Phe-98. Residues Glu-153 and Lys-158 each coordinate GTP. A DNA-binding region (H-T-H motif) is located at residues 203-222 (ASKVADRVGITRSVIVNALR).

This sequence belongs to the CodY family. Homodimer. Homotetramer. May form homodimers under conditions in which energy sources are sufficient (active state) and homotetramers under insufficient nutrient conditions (inactive state).

The protein localises to the cytoplasm. Its activity is regulated as follows. Activity of CodY is modulated by interaction with two types of effectors: the branched-chain amino acids (BCAAs) leucine, isoleucine and valine, which are signals of the nutritional status of the cell, and GTP, which may signal the energetic status of the cell. DNA-binding global transcriptional regulator which is involved in the adaptive response to starvation and acts by directly or indirectly controlling the expression of numerous genes in response to nutrient availability. During rapid exponential growth, CodY is highly active and represses genes whose products allow adaptation to nutrient depletion. This is Global transcriptional regulator CodY from Staphylococcus aureus (strain Mu3 / ATCC 700698).